Reading from the N-terminus, the 89-residue chain is Small ribosomal subunit protein uS14 (89 aa).

It belongs to the universal ribosomal protein uS14 family. In terms of assembly, part of the 30S ribosomal subunit. Contacts proteins S3 and S10.

Functionally, binds 16S rRNA, required for the assembly of 30S particles and may also be responsible for determining the conformation of the 16S rRNA at the A site. In Cytophaga hutchinsonii (strain ATCC 33406 / DSM 1761 / CIP 103989 / NBRC 15051 / NCIMB 9469 / D465), this protein is Small ribosomal subunit protein uS14.